The sequence spans 861 residues: Nuclear pore complex protein NUP93A (861 aa).

Belongs to the nucleoporin interacting component (NIC) family. Part of the nuclear pore complex (NPC). The NPC has an eight-fold symmetrical structure comprising a central transport channel and two rings, the cytoplasmic and nuclear rings, to which eight filaments are attached. The cytoplasmic filaments have loose ends, while the nuclear filaments are joined in a distal ring, forming a nuclear basket. NPCs are highly dynamic in configuration and composition, and can be devided in 3 subcomplexes, the NUP62 subcomplex, the NUP107-160 subcomplex and the NUP93 subcomplex, containing approximately 30 different nucleoporin proteins.

It localises to the nucleus envelope. The protein resides in the nucleus. It is found in the nuclear pore complex. The protein is Nuclear pore complex protein NUP93A of Arabidopsis thaliana (Mouse-ear cress).